We begin with the raw amino-acid sequence, 96 residues long: Interleukin-8 (96 aa).

A signal peptide spans M1–A22. Residue R27 is modified to Citrulline. 2 disulfide bridges follow: C34–C61 and C36–C78.

The protein belongs to the intercrine alpha (chemokine CxC) family. As to quaternary structure, homodimer. Interacts with TNFAIP6 (via Link domain); this interaction interferes with chemokine binding to glycosaminoglycans. Citrullination at Arg-27 prevents proteolysis, and dampens tissue inflammation, it also enhances leukocytosis, possibly through impaired chemokine clearance from the blood circulation.

It localises to the secreted. Functionally, chemotactic factor that mediates inflammatory response by attracting neutrophils, basophils, and T-cells to clear pathogens and protect the host from infection. Also plays an important role in neutrophil activation. Released in response to an inflammatory stimulus, exerts its effect by binding to the G-protein-coupled receptors CXCR1 and CXCR2, primarily found in neutrophils, monocytes and endothelial cells. G-protein heterotrimer (alpha, beta, gamma subunits) constitutively binds to CXCR1/CXCR2 receptor and activation by IL8 leads to beta and gamma subunits release from Galpha (GNAI2 in neutrophils) and activation of several downstream signaling pathways including PI3K and MAPK pathways. This is Interleukin-8 (CXCL8) from Dasypus novemcinctus (Nine-banded armadillo).